Reading from the N-terminus, the 85-residue chain is Electron transfer flavoprotein regulatory factor 1 homolog (85 aa).

It belongs to the complex I LYR family. In terms of tissue distribution, highly expressed in the larval fat body.

The protein localises to the mitochondrion. In terms of biological role, acts as a regulator of the electron transfer flavoprotein by promoting the removal of flavin from the ETF holoenzyme. May act with the ETF complex to coordinate lipid homeostasis in the fat body in response to stage-specific demands. The sequence is that of Electron transfer flavoprotein regulatory factor 1 homolog from Drosophila melanogaster (Fruit fly).